Consider the following 1777-residue polypeptide: Non-reducing polyketide synthase nscA (1777 aa).

An N-terminal acylcarrier protein transacylase domain (SAT) region spans residues 27 to 261; the sequence is DLFRRLDQHS…PLPVYDGLCH (235 aa). The Ketosynthase family 3 (KS3) domain occupies 396–829; sequence SSKLAIVGMA…GGNTTLLLED (434 aa). Active-site for beta-ketoacyl synthase activity residues include Cys569, His704, and His747. A malonyl-CoA:ACP transacylase (MAT) domain region spans residues 934-1212; sequence AFTGQGAYYH…SAIPSCRRNE (279 aa). The product template (PT) domain stretch occupies residues 1297-1616; that stretch reads TSLVHQITAE…RLLMDRFFSP (320 aa). Positions 1301 to 1437 are N-terminal hotdog fold; sequence HQITAETVEA…ATIRFEDPEA (137 aa). Positions 1301–1611 constitute a PKS/mFAS DH domain; that stretch reads HQITAETVEA…FRRVPRLLMD (311 aa). Residue His1333 is the Proton acceptor; for dehydratase activity of the active site. The segment at 1465–1611 is C-terminal hotdog fold; it reads ASRLSKPLAY…FRRVPRLLMD (147 aa). The active-site Proton donor; for dehydratase activity is the Asp1522. Residues 1674 to 1704 form a disordered region; it reads LLATSSKSSTPKESPIVTPAESERAEPVDNS. Residues 1677–1688 show a composition bias toward low complexity; it reads TSSKSSTPKESP. Residues 1700 to 1777 enclose the Carrier domain; the sequence is PVDNSMTSQC…EMTAWIEEYC (78 aa). Residue Ser1737 is modified to O-(pantetheine 4'-phosphoryl)serine.

Pantetheine 4'-phosphate serves as cofactor.

It participates in secondary metabolite biosynthesis. Its function is as follows. Non-reducing polyketide synthase; part of the gene cluster that mediates the biosynthesis of neosartoricin B, a prenylated anthracenone that probably exhibits T-cell antiproliferative activity, suggestive of a physiological role as an immunosuppressive agent. The non-reducing polyketide synthase nscA probably synthesizes and cyclizes the decaketide backbone. The hydrolase nscB then mediates the product release through hydrolysis followed by spontaneous decarboxylation. The prenyltransferase nscD catalyzes the addition of the dimethylallyl group to the aromatic C5. The FAD-dependent monooxygenase nscC is then responsible for the stereospecific hydroxylation at C2. Neosartoricin B can be converted into two additional compounds neosartoricins C and D. Neosartoricin C is a spirocyclic compound that is cyclized through the attack of C3 hydroxyl on C14, followed by dehydration. On the other hand, neosartoricin D is a further cyclized compound in which attack of C2 on C14 in neosartoricin C results in the formation of the acetal-containing dioxabicyclo-octanone ring. Both of these compounds are novel and possibly represent related metabolites of the gene cluster. This is Non-reducing polyketide synthase nscA from Trichophyton equinum (strain ATCC MYA-4606 / CBS 127.97) (Horse ringworm fungus).